Consider the following 298-residue polypeptide: tRNA dimethylallyltransferase (298 aa).

10–17 lines the ATP pocket; it reads GATATGKS. Residue 12–17 participates in substrate binding; that stretch reads TATGKS. Residues 35–38 form an interaction with substrate tRNA region; the sequence is DSRQ.

It belongs to the IPP transferase family. In terms of assembly, monomer. Mg(2+) is required as a cofactor.

It catalyses the reaction adenosine(37) in tRNA + dimethylallyl diphosphate = N(6)-dimethylallyladenosine(37) in tRNA + diphosphate. In terms of biological role, catalyzes the transfer of a dimethylallyl group onto the adenine at position 37 in tRNAs that read codons beginning with uridine, leading to the formation of N6-(dimethylallyl)adenosine (i(6)A). This Picosynechococcus sp. (strain ATCC 27264 / PCC 7002 / PR-6) (Agmenellum quadruplicatum) protein is tRNA dimethylallyltransferase.